The sequence spans 223 residues: Endonuclease V (223 aa).

2 residues coordinate Mg(2+): Asp35 and Asp103.

Belongs to the endonuclease V family. Mg(2+) is required as a cofactor.

The protein resides in the cytoplasm. It catalyses the reaction Endonucleolytic cleavage at apurinic or apyrimidinic sites to products with a 5'-phosphate.. In terms of biological role, DNA repair enzyme involved in the repair of deaminated bases. Selectively cleaves double-stranded DNA at the second phosphodiester bond 3' to a deoxyinosine leaving behind the intact lesion on the nicked DNA. In Cronobacter sakazakii (strain ATCC BAA-894) (Enterobacter sakazakii), this protein is Endonuclease V.